Consider the following 230-residue polypeptide: Ribosomal RNA small subunit methyltransferase G (230 aa).

S-adenosyl-L-methionine is bound by residues G95, F100, 146–147, and R159; that span reads GE.

The protein belongs to the methyltransferase superfamily. RNA methyltransferase RsmG family.

The protein localises to the cytoplasm. Specifically methylates the N7 position of a guanine in 16S rRNA. The sequence is that of Ribosomal RNA small subunit methyltransferase G from Parabacteroides distasonis (strain ATCC 8503 / DSM 20701 / CIP 104284 / JCM 5825 / NCTC 11152).